A 619-amino-acid chain; its full sequence is Very-long-chain aldehyde decarbonylase GL1-4 (619 aa).

The next 5 membrane-spanning stretches (helical) occupy residues 45 to 65 (IAFS…QIWI), 94 to 114 (GWDD…LAMP), 126 to 146 (GAVV…YWFH), 178 to 198 (FAEH…TIYL), and 325 to 345 (AWYM…AWIY). Positions 138-272 (VEFLYYWFHR…MPFYDYIYNT (135 aa)) constitute a Fatty acid hydroxylase domain.

The protein belongs to the sterol desaturase family. As to quaternary structure, homodimer.

The protein resides in the endoplasmic reticulum membrane. It carries out the reaction a long-chain fatty aldehyde + 2 NADPH + O2 + H(+) = a long-chain alkane + formate + 2 NADP(+) + H2O. Aldehyde decarbonylase involved in the conversion of aldehydes to alkanes. Core component of a very-long-chain alkane synthesis complex. The sequence is that of Very-long-chain aldehyde decarbonylase GL1-4 from Oryza sativa subsp. indica (Rice).